The primary structure comprises 160 residues: Transcription elongation factor GreA (160 aa).

Residues 53–73 are a coiled coil; it reads AREEQGMVEARIRDIEGRLQN.

The protein belongs to the GreA/GreB family.

Functionally, necessary for efficient RNA polymerase transcription elongation past template-encoded arresting sites. The arresting sites in DNA have the property of trapping a certain fraction of elongating RNA polymerases that pass through, resulting in locked ternary complexes. Cleavage of the nascent transcript by cleavage factors such as GreA or GreB allows the resumption of elongation from the new 3'terminus. GreA releases sequences of 2 to 3 nucleotides. This chain is Transcription elongation factor GreA, found in Pseudomonas putida (strain ATCC 47054 / DSM 6125 / CFBP 8728 / NCIMB 11950 / KT2440).